We begin with the raw amino-acid sequence, 230 residues long: Gilatoxin (230 aa).

In terms of domain architecture, Peptidase S1 spans 1–230; the sequence is IIGGQECDET…ISFLFWIQSI (230 aa). Disulfide bonds link Cys7–Cys146, Cys26–Cys42, Cys125–Cys193, Cys157–Cys172, and Cys183–Cys208. His41 (charge relay system) is an active-site residue. N-linked (GlcNAc...) asparagine glycosylation is present at Asn84. The Charge relay system role is filled by Asp93. Ser187 serves as the catalytic Charge relay system.

The protein belongs to the peptidase S1 family. Post-translationally, extensively glycosylated, contains approximately 8 mol of monosaccharide per mol of toxin. Expressed by the mandibular venom gland.

The protein resides in the secreted. Has kallikrein-like activity, releases bradykinin from kininogen. Catalyzes the hydrolysis of various arginine ester substrates for trypsin and thrombin and degrades both angiotensin I and II by cleavage of the dipeptide Asp-Arg from the NH2-terminal end. Fibrinogen is also degraded but a fibrin clot is not produced. May have a potentiating effect on potent hemorrhagic toxins present in the venom. This Heloderma horridum horridum (Mexican beaded lizard) protein is Gilatoxin.